A 313-amino-acid polypeptide reads, in one-letter code: Ribosomal RNA small subunit methyltransferase H (313 aa).

S-adenosyl-L-methionine-binding positions include glycine 35 to histidine 37, aspartate 55, phenylalanine 79, aspartate 101, and glutamine 108.

It belongs to the methyltransferase superfamily. RsmH family.

The protein localises to the cytoplasm. It carries out the reaction cytidine(1402) in 16S rRNA + S-adenosyl-L-methionine = N(4)-methylcytidine(1402) in 16S rRNA + S-adenosyl-L-homocysteine + H(+). Functionally, specifically methylates the N4 position of cytidine in position 1402 (C1402) of 16S rRNA. The polypeptide is Ribosomal RNA small subunit methyltransferase H (Enterobacter sp. (strain 638)).